Consider the following 425-residue polypeptide: Intermediate conductance calcium-activated potassium channel protein 4 (425 aa).

The chain crosses the membrane as a helical span at residues 30 to 50 (LVLAGTGIGLMVLHAEMLWFL). Residues 59-79 (LLVKCLITLSTAFLLCLIVVF) form a helical membrane-spanning segment. Residues 105-121 (VAQILLELLVCGVHPVP) form a helical membrane-spanning segment. The chain crosses the membrane as a helical span at residues 141 to 161 (GFLGEGEALLSLAMLLRLYLV). The chain crosses the membrane as a helical span at residues 205 to 225 (LLLGLTLGLWLTTAWVLSVAE). The pore-forming intramembrane region spans 239 to 259 (LWLIPITFLTIGYGDVVPGTL). A helical membrane pass occupies residues 263–283 (IVCLCTGVMGVCCTALLVAVV). Residues 284 to 345 (ARKLEFNKAE…RRHQRKMLAA (62 aa)) are calmodulin-binding. A Phosphohistidine modification is found at H356.

Belongs to the potassium channel KCNN family. KCa3.1/KCNN4 subfamily. As to quaternary structure, homodimer. Homotetramer. Heterotetramer of potassium channel proteins. Interacts with MTMR6; this interaction leads to selective dephosphorylation of PI(3)P in a lipid microdomain adjacent to KCNN4, resulting in a decrease of intermediate conductance calcium-activated potassium channel activity. Interacts (via the C-tail domain) with CALM1; the calmodulin binding is constitutive, does not require calcium and mediates calcium-dependent gating and four calmodulin molecules bind to one channel tetramer. Post-translationally, phosphorylation at His-356 by NDKB activates the intermediate conductance calcium-activated potassium channel activity, and conversely it's dephosphorylation by PHPT1 inhibits this activity.

It localises to the cell membrane. The protein resides in the cell projection. Its subcellular location is the ruffle membrane. The enzyme catalyses K(+)(in) = K(+)(out). In terms of biological role, intermediate conductance calcium-activated potassium channel that mediates the voltage-independent transmembrane transfer of potassium across the cell membrane through a constitutive interaction with calmodulin which binds the intracellular calcium allowing its opening. The current is characterized by a voltage-independent activation, an intracellular calcium concentration increase-dependent activation and a single-channel conductance of about 25 picosiemens. Also presents an inwardly rectifying current, thus reducing its already small outward conductance of potassium ions, which is particularly the case when the membrane potential displays positive values, above + 20 mV. Controls calcium influx during vascular contractility by being responsible of membrane hyperpolarization induced by vasoactive factors in proliferative vascular smooth muscle cell types. Following calcium influx, the consecutive activation of KCNN4 channel leads to a hyperpolarization of the cell membrane potential and hence an increase of the electrical driving force for further calcium influx promoting sustained calcium entry in response to stimulation with chemotactic peptides. Required for maximal calcium influx and proliferation during the reactivation of naive T-cells. Plays a role in the late stages of EGF-induced macropinocytosis through activation by PI(3)P. The protein is Intermediate conductance calcium-activated potassium channel protein 4 of Rattus norvegicus (Rat).